The sequence spans 404 residues: Argininosuccinate synthase (404 aa).

Residues 10–18 and Ala-38 contribute to the ATP site; that span reads AYSGGVDTS. Residue Tyr-89 participates in L-citrulline binding. Gly-119 serves as a coordination point for ATP. The L-aspartate site is built by Thr-121, Asn-125, and Asp-126. Position 125 (Asn-125) interacts with L-citrulline. Positions 129, 177, 186, 262, and 274 each coordinate L-citrulline.

Belongs to the argininosuccinate synthase family. Type 1 subfamily. As to quaternary structure, homotetramer.

It is found in the cytoplasm. The enzyme catalyses L-citrulline + L-aspartate + ATP = 2-(N(omega)-L-arginino)succinate + AMP + diphosphate + H(+). The protein operates within amino-acid biosynthesis; L-arginine biosynthesis; L-arginine from L-ornithine and carbamoyl phosphate: step 2/3. The chain is Argininosuccinate synthase from Prochlorococcus marinus (strain MIT 9301).